A 467-amino-acid chain; its full sequence is Putative alpha-amylase (467 aa).

The active-site Nucleophile is the Glu-145.

This sequence belongs to the glycosyl hydrolase 57 family.

The enzyme catalyses Endohydrolysis of (1-&gt;4)-alpha-D-glucosidic linkages in polysaccharides containing three or more (1-&gt;4)-alpha-linked D-glucose units.. The chain is Putative alpha-amylase from Methanocaldococcus jannaschii (strain ATCC 43067 / DSM 2661 / JAL-1 / JCM 10045 / NBRC 100440) (Methanococcus jannaschii).